The following is a 247-amino-acid chain: Cyclin-Q (247 aa).

The protein belongs to the cyclin family. Cyclin-like FAM58 subfamily.

Its function is as follows. May be an activating cyclin for the cyclin-associated kinase CDK10. The protein is Cyclin-Q (ccnq) of Danio rerio (Zebrafish).